A 291-amino-acid polypeptide reads, in one-letter code: Undecaprenyl-diphosphatase (291 aa).

The next 8 membrane-spanning stretches (helical) occupy residues 1–21, 48–68, 102–122, 126–146, 162–182, 203–223, 231–251, and 267–287; these read MFIIELIKGIILGVVEGLTEF, SAFTFKIVIQLGSVFAAAWVF, LHVLVGMVPAGILGLLFDDFI, LFSVPTVMIGLFVGAIYMIIA, ISYFQAFVIGISQAVAMWPGF, SDFTFIMAVPIMLAASGLSLL, IADIPFYILGFLAAFTVGLIA, and FAIYRIVLVIFIAILYFGFGI.

The protein belongs to the UppP family.

The protein resides in the cell membrane. It carries out the reaction di-trans,octa-cis-undecaprenyl diphosphate + H2O = di-trans,octa-cis-undecaprenyl phosphate + phosphate + H(+). Its function is as follows. Catalyzes the dephosphorylation of undecaprenyl diphosphate (UPP). Confers resistance to bacitracin. This chain is Undecaprenyl-diphosphatase, found in Staphylococcus aureus (strain USA300).